The following is a 143-amino-acid chain: Putative acyl carrier protein phosphodiesterase (143 aa).

The protein belongs to the AcpH family.

The enzyme catalyses holo-[ACP] + H2O = apo-[ACP] + (R)-4'-phosphopantetheine + H(+). Converts holo-ACP to apo-ACP by hydrolytic cleavage of the phosphopantetheine prosthetic group from ACP. The polypeptide is Putative acyl carrier protein phosphodiesterase (acpH) (Shigella flexneri).